The chain runs to 328 residues: GTPase Obg (328 aa).

In terms of domain architecture, Obg spans 2–160 (YNFKDSVNIT…LSVRLELFLV (159 aa)). The OBG-type G domain occupies 161 to 326 (ADIGLVGLPN…LIKEFFILAK (166 aa)). Residues 167–174 (GLPNAGKS), 192–196 (FTTKI), 213–216 (DIPG), 280–283 (NKLD), and 307–309 (SIY) contribute to the GTP site. Mg(2+) contacts are provided by S174 and T194.

Belongs to the TRAFAC class OBG-HflX-like GTPase superfamily. OBG GTPase family. Monomer. It depends on Mg(2+) as a cofactor.

Its subcellular location is the cytoplasm. An essential GTPase which binds GTP, GDP and possibly (p)ppGpp with moderate affinity, with high nucleotide exchange rates and a fairly low GTP hydrolysis rate. Plays a role in control of the cell cycle, stress response, ribosome biogenesis and in those bacteria that undergo differentiation, in morphogenesis control. The sequence is that of GTPase Obg from Borreliella burgdorferi (strain ATCC 35210 / DSM 4680 / CIP 102532 / B31) (Borrelia burgdorferi).